Here is a 716-residue protein sequence, read N- to C-terminus: Polyribonucleotide nucleotidyltransferase (716 aa).

Asp-490 and Asp-496 together coordinate Mg(2+). A KH domain is found at 556–615; that stretch reads PKIETLTIPTDKIREVIGSGGKVIREIVETSGAKVDINDDGVIKIASNDQAAIKKAYDMI. One can recognise an S1 motif domain in the interval 625-693; the sequence is GQIYTGKVVK…ERGKVRLGMK (69 aa). The segment at 695–716 is disordered; that stretch reads VDQETGQEIQPEKKEKEEAGEA. The segment covering 704–716 has biased composition (basic and acidic residues); that stretch reads QPEKKEKEEAGEA.

It belongs to the polyribonucleotide nucleotidyltransferase family. Mg(2+) is required as a cofactor.

The protein localises to the cytoplasm. It carries out the reaction RNA(n+1) + phosphate = RNA(n) + a ribonucleoside 5'-diphosphate. Its function is as follows. Involved in mRNA degradation. Catalyzes the phosphorolysis of single-stranded polyribonucleotides processively in the 3'- to 5'-direction. The chain is Polyribonucleotide nucleotidyltransferase from Cereibacter sphaeroides (strain ATCC 17029 / ATH 2.4.9) (Rhodobacter sphaeroides).